Reading from the N-terminus, the 250-residue chain is MPASSPFLLAPKGPPGNMGGPVREPALSVALWLSWGAALGAVACAMALLTQQTELQSLRREVSRLQGTGGPSQNGEGYPWQSLPEQSSDALEAWENGERSRKRRAVLTQKQKKQHSVLHLVPINATSKDDSDVTEVMWQPALRRGRGLQAQGYGVRIQDAGVYLLYSQVLFQDVTFTMGQVVSREGQGRQETLFRCIRSMPSHPDRAYNSCYSAGVFHLHQGDILSVIIPRARAKLNLSPHGTFLGFVKL.

A propeptide spanning residues 1 to 104 (MPASSPFLLA…ENGERSRKRR (104 aa)) is cleaved from the precursor. Disordered regions lie at residues 61–82 (EVSRLQGTGGPSQNGEGYPWQS) and 89–108 (DALEAWENGERSRKRRAVLT). Residues 116-250 (SVLHLVPINA…HGTFLGFVKL (135 aa)) enclose the THD domain. Asn-124 is a glycosylation site (N-linked (GlcNAc...) asparagine). Cys-196 and Cys-211 are oxidised to a cystine.

It belongs to the tumor necrosis factor family. Homotrimer. The precursor is cleaved by furin. As to expression, expressed at high levels in transformed cell lines, cancers of colon, thyroid, lymphoid tissues and specifically expressed in monocytes and macrophages.

It localises to the secreted. In terms of biological role, cytokine that binds to TNFRSF13B/TACI and to TNFRSF17/BCMA. Plays a role in the regulation of tumor cell growth. May be involved in monocyte/macrophage-mediated immunological processes. This is Tumor necrosis factor ligand superfamily member 13 (TNFSF13) from Homo sapiens (Human).